A 448-amino-acid polypeptide reads, in one-letter code: Trigger factor (448 aa).

One can recognise a PPIase FKBP-type domain in the interval 167–253 (GSIVRVDFVE…IKDIKKRDIP (87 aa)).

This sequence belongs to the FKBP-type PPIase family. Tig subfamily.

Its subcellular location is the cytoplasm. It carries out the reaction [protein]-peptidylproline (omega=180) = [protein]-peptidylproline (omega=0). Its function is as follows. Involved in protein export. Acts as a chaperone by maintaining the newly synthesized protein in an open conformation. Functions as a peptidyl-prolyl cis-trans isomerase. This is Trigger factor from Borrelia hermsii (strain HS1 / DAH).